Consider the following 339-residue polypeptide: Phosphate acyltransferase (339 aa).

This sequence belongs to the PlsX family. In terms of assembly, homodimer. Probably interacts with PlsY.

The protein resides in the cytoplasm. It carries out the reaction a fatty acyl-[ACP] + phosphate = an acyl phosphate + holo-[ACP]. Its pathway is lipid metabolism; phospholipid metabolism. Its function is as follows. Catalyzes the reversible formation of acyl-phosphate (acyl-PO(4)) from acyl-[acyl-carrier-protein] (acyl-ACP). This enzyme utilizes acyl-ACP as fatty acyl donor, but not acyl-CoA. This is Phosphate acyltransferase from Vesicomyosocius okutanii subsp. Calyptogena okutanii (strain HA).